The chain runs to 925 residues: Protein PDC2 (925 aa).

Positions 63–138 constitute an HTH CENPB-type domain; the sequence is DANRLRKPNN…LSKMDVNISV (76 aa). 3 disordered regions span residues 510–596, 674–693, and 904–925; these read DNNQ…RNSS, NEKAASDQNKSTDELPSSTA, and PTGGSNLPDSNNLHLPGNTGFF. The segment covering 513–537 has biased composition (polar residues); it reads QNHLSMSQASHNPDYNSNHSNNAIE. A compositionally biased stretch (low complexity) spans 538–563; the sequence is NTNNRGSNNNNNNNGSSNNINDNDSS. Polar residues predominate over residues 565–596; it reads KYLQQNTVDNSTKTGNPGQPNISSMESQRNSS. Positions 674-686 are enriched in basic and acidic residues; sequence NEKAASDQNKSTD. Residues 904–916 are compositionally biased toward polar residues; it reads PTGGSNLPDSNNL.

Functionally, essential for the synthesis of pyruvate decarboxylase. May be important for a high basal level of PDC gene expression or play a positive role in the autoregulation control of PDC1 and PDC5. The sequence is that of Protein PDC2 (PDC2) from Saccharomyces cerevisiae (strain ATCC 204508 / S288c) (Baker's yeast).